We begin with the raw amino-acid sequence, 277 residues long: Phosphatidylglycerol--prolipoprotein diacylglyceryl transferase (277 aa).

A run of 4 helical transmembrane segments spans residues 15 to 35, 50 to 70, 89 to 109, and 112 to 132; these read IHVR…TFMS, IDLL…YYVI, GGIA…VFCY, and FLPP…AQVL. R134 is an a 1,2-diacyl-sn-glycero-3-phospho-(1'-sn-glycerol) binding site. The next 3 helical transmembrane spans lie at 174 to 194, 204 to 224, and 234 to 254; these read KPTF…ILSL, GEVF…VEGM, and VIRV…ILFV.

Belongs to the Lgt family.

The protein resides in the cell membrane. It catalyses the reaction L-cysteinyl-[prolipoprotein] + a 1,2-diacyl-sn-glycero-3-phospho-(1'-sn-glycerol) = an S-1,2-diacyl-sn-glyceryl-L-cysteinyl-[prolipoprotein] + sn-glycerol 1-phosphate + H(+). The protein operates within protein modification; lipoprotein biosynthesis (diacylglyceryl transfer). Catalyzes the transfer of the diacylglyceryl group from phosphatidylglycerol to the sulfhydryl group of the N-terminal cysteine of a prolipoprotein, the first step in the formation of mature lipoproteins. This chain is Phosphatidylglycerol--prolipoprotein diacylglyceryl transferase, found in Lactobacillus delbrueckii subsp. bulgaricus (strain ATCC 11842 / DSM 20081 / BCRC 10696 / JCM 1002 / NBRC 13953 / NCIMB 11778 / NCTC 12712 / WDCM 00102 / Lb 14).